Reading from the N-terminus, the 414-residue chain is Diaminopimelate decarboxylase (414 aa).

K52 is subject to N6-(pyridoxal phosphate)lysine. Pyridoxal 5'-phosphate is bound by residues G231 and 265–268 (EPGR). Substrate contacts are provided by R268, R304, and Y308. C334 functions as the Proton donor in the catalytic mechanism. Residues E335 and Y362 each contribute to the substrate site. Y362 provides a ligand contact to pyridoxal 5'-phosphate.

The protein belongs to the Orn/Lys/Arg decarboxylase class-II family. LysA subfamily. As to quaternary structure, homodimer. The cofactor is pyridoxal 5'-phosphate.

The enzyme catalyses meso-2,6-diaminopimelate + H(+) = L-lysine + CO2. Its pathway is amino-acid biosynthesis; L-lysine biosynthesis via DAP pathway; L-lysine from DL-2,6-diaminopimelate: step 1/1. Functionally, specifically catalyzes the decarboxylation of meso-diaminopimelate (meso-DAP) to L-lysine. This chain is Diaminopimelate decarboxylase, found in Neisseria meningitidis serogroup B (strain ATCC BAA-335 / MC58).